Here is a 206-residue protein sequence, read N- to C-terminus: Translation initiation factor IF-3 (206 aa).

This sequence belongs to the IF-3 family. As to quaternary structure, monomer.

The protein resides in the cytoplasm. IF-3 binds to the 30S ribosomal subunit and shifts the equilibrium between 70S ribosomes and their 50S and 30S subunits in favor of the free subunits, thus enhancing the availability of 30S subunits on which protein synthesis initiation begins. In Shigella flexneri, this protein is Translation initiation factor IF-3.